A 762-amino-acid polypeptide reads, in one-letter code: 5-methyltetrahydropteroyltriglutamate--homocysteine methyltransferase (762 aa).

Residues 18–21 and Lys112 contribute to the 5-methyltetrahydropteroyltri-L-glutamate site; that span reads REWK. L-homocysteine is bound by residues 435–437 and Glu488; that span reads IGS. L-methionine is bound by residues 435-437 and Glu488; that span reads IGS. Residues 519 to 520 and Trp565 each bind 5-methyltetrahydropteroyltri-L-glutamate; that span reads RC. Asp603 serves as a coordination point for L-homocysteine. Asp603 contributes to the L-methionine binding site. Glu609 is a binding site for 5-methyltetrahydropteroyltri-L-glutamate. Zn(2+)-binding residues include His645, Cys647, and Glu669. The Proton donor role is filled by His698. Cys730 lines the Zn(2+) pocket.

The protein belongs to the vitamin-B12 independent methionine synthase family. Zn(2+) is required as a cofactor.

It catalyses the reaction 5-methyltetrahydropteroyltri-L-glutamate + L-homocysteine = tetrahydropteroyltri-L-glutamate + L-methionine. It participates in amino-acid biosynthesis; L-methionine biosynthesis via de novo pathway; L-methionine from L-homocysteine (MetE route): step 1/1. Catalyzes the transfer of a methyl group from 5-methyltetrahydrofolate to homocysteine resulting in methionine formation. The chain is 5-methyltetrahydropteroyltriglutamate--homocysteine methyltransferase from Bacillus velezensis (strain DSM 23117 / BGSC 10A6 / LMG 26770 / FZB42) (Bacillus amyloliquefaciens subsp. plantarum).